Consider the following 412-residue polypeptide: Intraflagellar transport protein che-13 (412 aa).

Disordered regions lie at residues 1–21 and 162–193; these read MEEE…GSAI and PPKE…NFLD. Over residues 165–193 the composition is skewed to acidic residues; that stretch reads EEDEDTAVDEQDEDDDNDDIVEEPMNFLD. Residues 302 to 393 are a coiled coil; that stretch reads QLASMMSKFR…VQIGVFEQSI (92 aa).

Belongs to the IFT57 family. Component of the IFT complex B composed of at least che-2, che-13, dyf-1, dyf-3, dyf-6, dyf-11, dyf-13, ift-20, ift-74, ift-81, ifta-2, osm-1, osm-5 and osm-6.

It localises to the cytoplasm. Its subcellular location is the cytoskeleton. The protein resides in the cilium axoneme. Its function is as follows. Component of the intraflagellar transport (IFT) complex B required for transport of proteins in the motile cilium. May be required for ciliary entrance and transport of specific ciliary cargo proteins such as che-3 which are related to motility. Required for the formation of chemosensory cilia that detect chemosensory cues. The polypeptide is Intraflagellar transport protein che-13 (Caenorhabditis elegans).